The following is a 185-amino-acid chain: Elongation factor P (185 aa).

The protein belongs to the elongation factor P family.

Its subcellular location is the cytoplasm. The protein operates within protein biosynthesis; polypeptide chain elongation. In terms of biological role, involved in peptide bond synthesis. Stimulates efficient translation and peptide-bond synthesis on native or reconstituted 70S ribosomes in vitro. Probably functions indirectly by altering the affinity of the ribosome for aminoacyl-tRNA, thus increasing their reactivity as acceptors for peptidyl transferase. The protein is Elongation factor P of Clostridium botulinum (strain ATCC 19397 / Type A).